The following is a 119-amino-acid chain: Large ribosomal subunit protein bL20 (119 aa).

The protein belongs to the bacterial ribosomal protein bL20 family.

In terms of biological role, binds directly to 23S ribosomal RNA and is necessary for the in vitro assembly process of the 50S ribosomal subunit. It is not involved in the protein synthesizing functions of that subunit. In Geobacillus thermodenitrificans (strain NG80-2), this protein is Large ribosomal subunit protein bL20.